The primary structure comprises 471 residues: Adenosylhomocysteinase (471 aa).

Positions 60, 135, and 196 each coordinate substrate. An NAD(+)-binding site is contributed by 197–199 (TTT). Substrate-binding residues include Lys226 and Asp230. NAD(+) is bound by residues Asn231, 260–265 (GYGDVG), Glu283, Asn318, 339–341 (IGH), and Asn387.

This sequence belongs to the adenosylhomocysteinase family. Requires NAD(+) as cofactor.

It is found in the cytoplasm. The enzyme catalyses S-adenosyl-L-homocysteine + H2O = L-homocysteine + adenosine. Its pathway is amino-acid biosynthesis; L-homocysteine biosynthesis; L-homocysteine from S-adenosyl-L-homocysteine: step 1/1. Its function is as follows. May play a key role in the regulation of the intracellular concentration of adenosylhomocysteine. The sequence is that of Adenosylhomocysteinase from Chlorobaculum tepidum (strain ATCC 49652 / DSM 12025 / NBRC 103806 / TLS) (Chlorobium tepidum).